The following is a 495-amino-acid chain: MTVMSGENADEASTAPGHPQDGSYPRQADHDDHECCERVVINISGLRFETQLKTLAQFPNTLLGNPKKRMRYFDPLRNEYFFDRNRPSFDAILYYYQSGGRLRRPVNVPLDMFSEEIKFYELGEEAMEKFREDEGFIKEEERPLPEKEYQRQVWLLFEYPESSGPARVIAIVSVMVILISIVIFCLETLPELKDDKDFTGTIHRIDNTTVIYTSNIFTDPFFIVETLCIIWFSFELVVRFFACPSKTDFFKNIMNFIDIVAIIPYFITLGTEIAEQEGNQKGEQATSLAILRVIRLVRVFRIFKLSRHSKGLQILGQTLKASMRELGLLIFFLFIGVILFSSAVYFAEAEEAESHFSSIPDAFWWAVVSMTTVGYGDMYPVTIGGKIVGSLCAIAGVLTIALPVPVIVSNFNYFYHRETEGEEQAQLLHVSSPNLASDSDLSRRSSSTISKSEYMEIEEDMNNSIAHYRQANIRTGNCTTADQNCVNKSKLLTDV.

The segment at methionine 1 to histidine 30 is disordered. The tetramerization domain stretch occupies residues methionine 1–glutamate 128. Topologically, residues methionine 1–glycine 164 are cytoplasmic. Serine 23 is modified (phosphoserine). Residues proline 165 to leucine 186 traverse the membrane as a helical segment. Residues glutamate 187–proline 220 lie on the Extracellular side of the membrane. Asparagine 207 is a glycosylation site (N-linked (GlcNAc...) asparagine). A helical membrane pass occupies residues phenylalanine 221–alanine 242. Cysteine 243 is lipidated: S-palmitoyl cysteine. Residues cysteine 243 to isoleucine 253 lie on the Cytoplasmic side of the membrane. A helical transmembrane segment spans residues methionine 254–alanine 274. Topologically, residues glutamate 275–serine 287 are extracellular. The chain crosses the membrane as a helical; Voltage-sensor span at residues leucine 288–histidine 308. Residues serine 309 to methionine 323 are Cytoplasmic-facing. Positions lysine 310 to methionine 323 are S4-S5 linker. Residue serine 322 is modified to Phosphoserine; by PKA. Residues arginine 324–tyrosine 345 form a helical membrane-spanning segment. The Extracellular segment spans residues phenylalanine 346 to isoleucine 359. The segment at residues proline 360–threonine 371 is an intramembrane region (helical). Positions threonine 372 to aspartate 377 match the Selectivity filter motif. The stretch at threonine 372–tyrosine 379 is an intramembrane region. The Extracellular portion of the chain corresponds to proline 380–lysine 386. A helical membrane pass occupies residues isoleucine 387–tyrosine 415. The Cytoplasmic portion of the chain corresponds to histidine 416 to valine 495. A phosphoserine mark is found at serine 437 and serine 439. Phosphoserine; by PKA is present on serine 446. Positions threonine 493–valine 495 match the PDZ-binding motif.

It belongs to the potassium channel family. A (Shaker) (TC 1.A.1.2) subfamily. Kv1.1/KCNA1 sub-subfamily. In terms of assembly, homotetramer and heterotetramer with other channel-forming alpha subunits, such as KCNA2, KCNA4, KCNA5, KCNA6 and KCNA7. Channel activity is regulated by interaction with the beta subunits KCNAB1 and KCNAB2. Identified in a complex with KCNA2 and KCNAB2. Interacts (via C-terminus) with the PDZ domains of DLG1, DLG2 and DLG4. Interacts with LGI1 within a complex containing LGI1, KCNA4 and KCNAB1. Interacts (via N-terminus) with STX1A; this promotes channel inactivation. Interacts (via N-terminus) with the heterodimer formed by GNB1 and GNG2; this promotes channel inactivation. Can interact simultaneously with STX1A and the heterodimer formed by GNB1 and GNG2. Interacts (via cytoplasmic N-terminal domain) with KCNRG; this inhibits channel activity. Interacts with ANK3; this inhibits channel activity. Interacts with ADAM11. N-glycosylated. In terms of processing, palmitoylated on Cys-243; which may be required for membrane targeting. Post-translationally, phosphorylated on tyrosine residues. Phosphorylation increases in response to NRG1; this inhibits channel activity. Phosphorylation at Ser-446 regulates channel activity by down-regulating expression at the cell membrane. In terms of tissue distribution, detected in brain. Expressed in cerebellar cortex basket cell terminals, the area surround the Purkinje cell soma, and the pinceaux expansions encircling the axon initial segment (at protein level). Detected in the juxtaparanodal regions of the nodes of Ranvier in myelinated axons. Detected in the paranodal region in sciatic nerve. Detected on cell bodies in cerebellum, dorsal and ventral cochlear nucleus, pontine reticular nucleus, mesencephalic trigeminal nucleus, motor trigeminal nucleus and the pricipal sensory trigeminal nucleus. Detected in terminal fields of basket cells in the cerebellum corpus medullare. Detected in hippocampus CA3 pyramidal neurons and in the hilus and stratum moleculare of the dentate gyrus. Detected in the central nucleus and the external nucleus of the inferior colliculus. Detected in fiber tracts in the optic tract, external medullary lamina, stria terminalis, medulla, ventral pallidum and substantia nigra. Detected in neurons from dorsal root ganglion. Detected in neurons in the medial nucleus of the trapezoid body. Detected in midbrain dopamine neuron axon terminals. Detected in brain cortex. Detected in brainstem. Detected in juxtaparanodal regions of the nodes of Ranvier in the vagus nerve, but only at very low levels in the heart. Detected in the islet of Langerhans. Detected at the luminal membrane in distal convoluted tubules in the kidney (at protein level). Detected in hippocampus, thalamus, neocortex and ventral brain cortex, including the piriform and entorhinal cortex and the amygdala. Detected in midbrain dopamine neurons. Detected in heart atrium, ventricle, sinoatrial node and atrioventricular node.

Its subcellular location is the cell membrane. It localises to the cell projection. It is found in the axon. The protein localises to the membrane. The protein resides in the perikaryon. Its subcellular location is the dendrite. It localises to the cell junction. It is found in the synapse. The protein localises to the cytoplasmic vesicle. The protein resides in the endoplasmic reticulum. Its subcellular location is the presynaptic cell membrane. It localises to the presynapse. It carries out the reaction K(+)(in) = K(+)(out). With respect to regulation, inhibited by 4-aminopyridine (4-AP), tetraethylammonium (TEA) and dendrotoxin (DTX), but not by charybdotoxin (CTX). In terms of biological role, voltage-gated potassium channel that mediates transmembrane potassium transport in excitable membranes, primarily in the brain and the central nervous system, but also in the kidney. Contributes to the regulation of the membrane potential and nerve signaling, and prevents neuronal hyperexcitability. Forms tetrameric potassium-selective channels through which potassium ions pass in accordance with their electrochemical gradient. The channel alternates between opened and closed conformations in response to the voltage difference across the membrane. Can form functional homotetrameric channels and heterotetrameric channels that contain variable proportions of KCNA1, KCNA2, KCNA4, KCNA5, KCNA6, KCNA7, and possibly other family members as well; channel properties depend on the type of alpha subunits that are part of the channel. Channel properties are modulated by cytoplasmic beta subunits that regulate the subcellular location of the alpha subunits and promote rapid inactivation of delayed rectifier potassium channels. In vivo, membranes probably contain a mixture of heteromeric potassium channel complexes, making it difficult to assign currents observed in intact tissues to any particular potassium channel family member. Homotetrameric KCNA1 forms a delayed-rectifier potassium channel that opens in response to membrane depolarization, followed by slow spontaneous channel closure. In contrast, a heterotetrameric channel formed by KCNA1 and KCNA4 shows rapid inactivation. Regulates neuronal excitability in hippocampus, especially in mossy fibers and medial perforant path axons, preventing neuronal hyperexcitability. May function as down-stream effector for G protein-coupled receptors and inhibit GABAergic inputs to basolateral amygdala neurons. May contribute to the regulation of neurotransmitter release, such as gamma-aminobutyric acid (GABA) release. Plays a role in regulating the generation of action potentials and preventing hyperexcitability in myelinated axons of the vagus nerve, and thereby contributes to the regulation of heart contraction. Required for normal neuromuscular responses. Regulates the frequency of neuronal action potential firing in response to mechanical stimuli, and plays a role in the perception of pain caused by mechanical stimuli, but does not play a role in the perception of pain due to heat stimuli. Required for normal responses to auditory stimuli and precise location of sound sources, but not for sound perception. The use of toxins that block specific channels suggest that it contributes to the regulation of the axonal release of the neurotransmitter dopamine. Required for normal postnatal brain development and normal proliferation of neuronal precursor cells in the brain. Plays a role in the reabsorption of Mg(2+) in the distal convoluted tubules in the kidney and in magnesium ion homeostasis, probably via its effect on the membrane potential. The protein is Potassium voltage-gated channel subfamily A member 1 of Mus musculus (Mouse).